The chain runs to 297 residues: 4-diphosphocytidyl-2-C-methyl-D-erythritol kinase (297 aa).

Active-site residues include Lys6 and Asp144.

Belongs to the GHMP kinase family. IspE subfamily.

The enzyme catalyses 4-CDP-2-C-methyl-D-erythritol + ATP = 4-CDP-2-C-methyl-D-erythritol 2-phosphate + ADP + H(+). Its pathway is isoprenoid biosynthesis; isopentenyl diphosphate biosynthesis via DXP pathway; isopentenyl diphosphate from 1-deoxy-D-xylulose 5-phosphate: step 3/6. Its function is as follows. Catalyzes the phosphorylation of the position 2 hydroxy group of 4-diphosphocytidyl-2C-methyl-D-erythritol. This Leptospira interrogans serogroup Icterohaemorrhagiae serovar copenhageni (strain Fiocruz L1-130) protein is 4-diphosphocytidyl-2-C-methyl-D-erythritol kinase.